The primary structure comprises 31 residues: Morintide mO3 (31 aa).

In terms of domain architecture, Chitin-binding type-1 spans 1-30; it reads NRLCCSQYGFCGTTSEYCSRANGCQSNCWG. 2 cysteine pairs are disulfide-bonded: Cys4-Cys18 and Cys24-Cys28.

In terms of tissue distribution, seeds (at protein level).

Chitin-binding protein which functions in defense against chitin-containing fungal pathogens. The sequence is that of Morintide mO3 from Moringa oleifera (Horseradish tree).